Consider the following 228-residue polypeptide: 6-carboxyhexanoate--CoA ligase (228 aa).

Belongs to the BioW family. In terms of assembly, homodimer. Mg(2+) is required as a cofactor.

It catalyses the reaction heptanedioate + ATP + CoA = 6-carboxyhexanoyl-CoA + AMP + diphosphate. The protein operates within metabolic intermediate metabolism; pimeloyl-CoA biosynthesis; pimeloyl-CoA from pimelate: step 1/1. Its function is as follows. Catalyzes the transformation of pimelate into pimeloyl-CoA with concomitant hydrolysis of ATP to AMP. The polypeptide is 6-carboxyhexanoate--CoA ligase (Staphylococcus epidermidis (strain ATCC 12228 / FDA PCI 1200)).